The following is a 1193-amino-acid chain: K(+) efflux antiporter 1, chloroplastic (1193 aa).

The transit peptide at 1–49 (MEYASTFQRPILFHGGDGASYCFPNRLISPKGISITSGDSKVHSCFRLR) directs the protein to the chloroplast. The Stromal portion of the chain corresponds to 50–585 (RNVAQSGTLN…MIPHQEVNEE (536 aa)). Residues 103-135 (SLGNADSNDHRIGESSESSDETEATDLKDARVE) form a disordered region. Positions 131-355 (DARVENDTDS…RAEKSLSISQ (225 aa)) form a coiled coil. At K168 the chain carries N6-acetyllysine; by NSI. Residues 351–364 (LSISQTPEETQGQL) show a composition bias toward polar residues. Disordered stretches follow at residues 351-372 (LSIS…TSQE) and 421-474 (QPYE…NSPK). Residues 439 to 465 (KVVEADSEKPKINVQTKKQETQKDLPK) are compositionally biased toward basic and acidic residues. The chain crosses the membrane as a helical span at residues 586–606 (EASLFDFLWLLLASVIFVPLF). The Chloroplast intermembrane segment spans residues 607-612 (QKIPGG). The helical transmembrane segment at 613-633 (SPVLGYLAAGILIGPYGLSII) threads the bilayer. Residues 634 to 640 (RNVHGTR) are Stromal-facing. A helical transmembrane segment spans residues 641 to 661 (AIAEFGVVFLLFNIGLELSVE). The Chloroplast intermembrane portion of the chain corresponds to 662–668 (RLSSMKK). Residues 669-689 (YVFGLGSAQVLVTAAVVGLLA) traverse the membrane as a helical segment. The Stromal portion of the chain corresponds to 690 to 698 (HYVAGQAGP). Residues 699–719 (AAIVIGNGLALSSTAVVLQVL) traverse the membrane as a helical segment. Over 720-733 (QERGESTSRHGRAS) the chain is Chloroplast intermembrane. The chain crosses the membrane as a helical span at residues 734–754 (FSVLLFQDLAVVVLLILIPLI). Over 755 to 766 (SPNSSKGGIGFQ) the chain is Stromal. Residues 767–787 (AIAEALGLAAVKAAVAITAII) form a helical membrane-spanning segment. Residues 788 to 827 (AGGRLLLRPIYKQIAENRNAEIFSANTLLVILGTSLLTAR) are Chloroplast intermembrane-facing. Residues 828-848 (AGLSMALGAFLAGLLLAETEF) traverse the membrane as a helical segment. Over 849 to 860 (SLQVESDIAPYR) the chain is Stromal. The helical transmembrane segment at 861–881 (GLLLGLFFMTVGMSIDPKLLL) threads the bilayer. At 882 to 883 (SN) the chain is on the chloroplast intermembrane side. Residues 884-904 (FPVIVGTLGLLIVGKTMLVVI) traverse the membrane as a helical segment. Residues 905–912 (MGKLFGIS) lie on the Stromal side of the membrane. A helical transmembrane segment spans residues 913 to 933 (IISAIRVGLLLAPGGEFAFVA). The Chloroplast intermembrane portion of the chain corresponds to 934-948 (FGEAVNQGIMSPQLS). A helical transmembrane segment spans residues 949–969 (SLLFLVVGISMAITPWLAAGG). At 970–1193 (QLIASRFELH…QIIEGGTVVI (224 aa)) the chain is on the stromal side. In terms of domain architecture, RCK N-terminal spans 995 to 1112 (QGHIIICGFG…EKAGATAVVP (118 aa)). The interval 1165–1184 (GYSRTSKPKPQPSDASGDNQ) is disordered.

Belongs to the monovalent cation:proton antiporter 2 (CPA2) transporter (TC 2.A.37) family. KEA (TC 2.A.37.1) subfamily. Post-translationally, acetylated at Lys-168 by the stromal acetyltransferase enzyme NSI. As to expression, expressed in shoots and roots. Mainly localized to leaf veins, hypocotyls, mesophylls and guard cells. Accumulates at high levels in small and dividing plastids (at protein level).

It is found in the plastid. The protein localises to the chloroplast inner membrane. The catalysed reaction is K(+)(in) + H(+)(out) = K(+)(out) + H(+)(in). Repressed by sodium ions Na(+). Functionally, electroneutral K(+)/H(+) efflux antiporter involved in chloroplastic K(+) homeostasis and osmotic adjustment, especially during plastid division and thylakoid membrane formation. Collaboratively with KEA2, adjusts alkaline stromal pH upon light to dark transitions in plastids. Together with KEA2, critical for chloroplast development, including chloroplast RNA-metabolism (e.g. rRNA maturation, polysome loading and RNA-protein interactions) and plastid gene expression (PGE), ion homeostasis, and photosynthesis. Contributes, during early seedling development, to the regulation of photosynthesis and abscisic acid- (ABA-) mediated primary root growth in a sucrose-dependent manner. Involved in the regulation of reactive oxygen and nitrogen species (ROS and RNS) metabolism. Required in roots for rapid hyperosmotic-induced Ca(2+) responses and for osmo-sensory potentiation in hyperosmotic conditions. May counteract resilience to drought and salt stress, involving photorespiratory pathway and stomata closure. This Arabidopsis thaliana (Mouse-ear cress) protein is K(+) efflux antiporter 1, chloroplastic.